The primary structure comprises 243 residues: Ribosomal RNA small subunit methyltransferase J (243 aa).

Residues 112–113 and Asp164 contribute to the S-adenosyl-L-methionine site; that span reads ER.

The protein belongs to the methyltransferase superfamily. RsmJ family.

It localises to the cytoplasm. It catalyses the reaction guanosine(1516) in 16S rRNA + S-adenosyl-L-methionine = N(2)-methylguanosine(1516) in 16S rRNA + S-adenosyl-L-homocysteine + H(+). In terms of biological role, specifically methylates the guanosine in position 1516 of 16S rRNA. The polypeptide is Ribosomal RNA small subunit methyltransferase J (Legionella pneumophila (strain Paris)).